Here is a 335-residue protein sequence, read N- to C-terminus: Serpentine receptor class alpha-13 (335 aa).

Residues 1–22 lie on the Extracellular side of the membrane; sequence MAIVSSENRTCADEKLLALYQS. Residues 23-43 traverse the membrane as a helical segment; the sequence is WSYIASIVFNCLVPTISTYFL. The Cytoplasmic portion of the chain corresponds to 44–61; that stretch reads GRAIFQLCNQATIQYSTR. Residues 62–82 form a helical membrane-spanning segment; it reads ILLIATILFAACHQVSYFAFK. Residues 83–107 are Extracellular-facing; that stretch reads IDLLHTMFFKLDQPCFLQRSSYDCR. Residues 108 to 128 form a helical membrane-spanning segment; it reads FISIAQTTGVVGMALTGLAMS. Residues 129 to 149 lie on the Cytoplasmic side of the membrane; that stretch reads TDRALALTFPADYHKLKSVPR. The chain crosses the membrane as a helical span at residues 150 to 170; it reads VVLSVFVFIVSFSTWFLLTMN. Residues 171–192 are Extracellular-facing; sequence DPLTGYLNHCGFYPSYSVANFQ. A helical membrane pass occupies residues 193-213; the sequence is LMLDVILYLAIFNLIWDVILF. At 214 to 235 the chain is on the cytoplasmic side; sequence YYARQQILWRRSYQFQKRYEAR. Residues 236–255 form a helical membrane-spanning segment; it reads ISLNCTQAVFVISICQCISN. Residues 256-278 are Extracellular-facing; that stretch reads GANSGLMRLLMMIGTSITSVTYS. Residues 279 to 299 traverse the membrane as a helical segment; the sequence is SLLSLFYTAPYSCILLPILMM. The Cytoplasmic portion of the chain corresponds to 300-335; sequence RISEYIREQRTIGILSLRSEKPGLEEHHQRMRAAWS.

Belongs to the nematode receptor-like protein sra family.

The protein resides in the membrane. Chemosensory receptor that negatively regulates RAS/MAPK signaling during vulva induction and the negative regulation of olfaction of volitile attractants. Required for the suppression of vulval induction in response to food starvation. Signaling acts through the GPA-5 G-alpha protein subunit. The polypeptide is Serpentine receptor class alpha-13 (Caenorhabditis briggsae).